Reading from the N-terminus, the 235-residue chain is Thrombin-like enzyme bilineobin (235 aa).

One can recognise a Peptidase S1 domain in the interval 1–227 (IIGGDECNIN…HLDWIQSIIA (227 aa)). 6 disulfide bridges follow: Cys-7/Cys-141, Cys-28/Cys-44, Cys-78/Cys-234, Cys-120/Cys-188, Cys-152/Cys-167, and Cys-178/Cys-203. His-43 functions as the Charge relay system in the catalytic mechanism. 3 N-linked (GlcNAc...) asparagine glycosylation sites follow: Asn-45, Asn-57, and Asn-81. The active-site Charge relay system is Asp-88. N-linked (GlcNAc...) asparagine glycosylation is found at Asn-132 and Asn-148. The active-site Charge relay system is the Ser-182. Asn-229 carries an N-linked (GlcNAc...) asparagine glycan.

Belongs to the peptidase S1 family. Snake venom subfamily. Monomer. In terms of processing, glycosylated. In terms of tissue distribution, expressed by the venom gland.

The protein resides in the secreted. With respect to regulation, not inhibited by hirudin. In terms of biological role, thrombin-like snake venom serine protease that has coagulant activity by releasing fibrinopeptides A and B from fibrinogen alpha (FGA) and beta (FGB), with a preference for beta chain. The sequence is that of Thrombin-like enzyme bilineobin from Agkistrodon bilineatus (Cantil).